The sequence spans 169 residues: MGLKYFSHLPEELREKIVHDHLQQERKKEFLEKAIEDSCRRHVSLLKSDPSPSEMYSLSKFLDSLADYVGRQFNTRCLIKWRKDVPANIKFQVMEEQHLRLYGFLDMDDLSCRELLPPEEDDDITYEDGMIVNCSELDKLFAALGIRVVYITVSNNCICTPLNKDIVIS.

The interval 9–22 (LPEELREKIVHDHL) is binding to host SKP1 protein. The LXCXE motif, interaction with host RBR motif lies at 110 to 114 (LSCRE).

Belongs to the nanovirus Clink protein family. Interacts with host SKP1. Interacts (via LXCXE domain) with host retinoblastoma-related protein 1 (RBR1). Interacts (via LXCXE domain) with retinoblastoma-related proteins (RBR).

Functionally, interacts with and disrupts the function of host retinoblastoma-related proteins RBR, which are key regulators of the cell cycle. Induces transcriptional activation of E2F-regulated S-phase and G2/M-phase-specific genes. Inactivation of the ability of RBR to arrest the cell cycle leads to the stimulation of viral DNA replication. The chain is Cell cycle link protein (DNA-C) from Faba bean necrotic yellows virus (isolate Egyptian EV1-93) (FBNYV).